Consider the following 507-residue polypeptide: Maturase K (507 aa).

Belongs to the intron maturase 2 family. MatK subfamily.

Its subcellular location is the plastid. The protein localises to the chloroplast. Functionally, usually encoded in the trnK tRNA gene intron. Probably assists in splicing its own and other chloroplast group II introns. The sequence is that of Maturase K from Browningia hertlingiana (Cactus).